Here is a 340-residue protein sequence, read N- to C-terminus: Biotin synthase (340 aa).

Positions 1-21 are disordered; sequence MDAASVSFGSGHDLSSQPRHD. The Radical SAM core domain maps to 53-272; it reads NHVETANLLS…IAVARIMMPR (220 aa). Positions 68, 72, and 75 each coordinate [4Fe-4S] cluster. Positions 112, 143, 203, and 276 each coordinate [2Fe-2S] cluster.

This sequence belongs to the radical SAM superfamily. Biotin synthase family. In terms of assembly, homodimer. It depends on [4Fe-4S] cluster as a cofactor. [2Fe-2S] cluster serves as cofactor.

The catalysed reaction is (4R,5S)-dethiobiotin + (sulfur carrier)-SH + 2 reduced [2Fe-2S]-[ferredoxin] + 2 S-adenosyl-L-methionine = (sulfur carrier)-H + biotin + 2 5'-deoxyadenosine + 2 L-methionine + 2 oxidized [2Fe-2S]-[ferredoxin]. It functions in the pathway cofactor biosynthesis; biotin biosynthesis; biotin from 7,8-diaminononanoate: step 2/2. Functionally, catalyzes the conversion of dethiobiotin (DTB) to biotin by the insertion of a sulfur atom into dethiobiotin via a radical-based mechanism. This chain is Biotin synthase, found in Nitrobacter hamburgensis (strain DSM 10229 / NCIMB 13809 / X14).